The following is a 190-amino-acid chain: Protein hunchback (190 aa).

Disordered stretches follow at residues 13–59, 86–110, and 142–190; these read EPMS…SSNL, AAMTPSPSNNDQNSPLTPPGLPNPM, and QTND…KYMA. Positions 17–31 are enriched in basic residues; that stretch reads HHHHHSHHHGHHHML. Residues 90–100 show a composition bias toward polar residues; that stretch reads PSPSNNDQNSP. Residues 171–190 show a composition bias toward basic and acidic residues; that stretch reads EPEKDHDLISNSSEDMKYMA.

Belongs to the hunchback C2H2-type zinc-finger protein family.

It is found in the nucleus. Functionally, gap class segmentation protein that controls development of head structures. The protein is Protein hunchback (hb) of Scaptomyza crassifemur (Fruit fly).